The following is a 257-amino-acid chain: Short-chain dehydrogenase reductase 3a (257 aa).

12–36 is an NAD(+) binding site; it reads IITGGASGIGAEAVRLFTDHGAKVV. Serine 144 contacts substrate. The Proton acceptor role is filled by tyrosine 157.

The protein belongs to the short-chain dehydrogenases/reductases (SDR) family. As to expression, highly expressed in the radicle tip, lateral root primordia and tips, and the area surrounding the cotyledon hydathode of young seedlings.

In terms of biological role, confers resistance to the incompatible pathogenic bacteria P.syringae pv. tomato DC3000 in a PR1-dependent manner. Seems not involved in abscisic acid (ABA) biosynthesis. This Arabidopsis thaliana (Mouse-ear cress) protein is Short-chain dehydrogenase reductase 3a (SDR3a).